The primary structure comprises 365 residues: uncharacterized protein (365 aa).

29-36 is an ATP binding site; that stretch reads GPLNSGKS.

This sequence belongs to the archaeal ATPase family.

This is an uncharacterized protein from Methanocaldococcus jannaschii (strain ATCC 43067 / DSM 2661 / JAL-1 / JCM 10045 / NBRC 100440) (Methanococcus jannaschii).